We begin with the raw amino-acid sequence, 417 residues long: Gamma-glutamyl phosphate reductase (417 aa).

Belongs to the gamma-glutamyl phosphate reductase family.

It localises to the cytoplasm. The catalysed reaction is L-glutamate 5-semialdehyde + phosphate + NADP(+) = L-glutamyl 5-phosphate + NADPH + H(+). The protein operates within amino-acid biosynthesis; L-proline biosynthesis; L-glutamate 5-semialdehyde from L-glutamate: step 2/2. Functionally, catalyzes the NADPH-dependent reduction of L-glutamate 5-phosphate into L-glutamate 5-semialdehyde and phosphate. The product spontaneously undergoes cyclization to form 1-pyrroline-5-carboxylate. This Escherichia coli (strain 55989 / EAEC) protein is Gamma-glutamyl phosphate reductase.